A 98-amino-acid polypeptide reads, in one-letter code: Large ribosomal subunit protein uL23 (98 aa).

It belongs to the universal ribosomal protein uL23 family. In terms of assembly, part of the 50S ribosomal subunit. Contacts protein L29, and trigger factor when it is bound to the ribosome.

Its function is as follows. One of the early assembly proteins it binds 23S rRNA. One of the proteins that surrounds the polypeptide exit tunnel on the outside of the ribosome. Forms the main docking site for trigger factor binding to the ribosome. This is Large ribosomal subunit protein uL23 from Methylorubrum extorquens (strain CM4 / NCIMB 13688) (Methylobacterium extorquens).